The chain runs to 213 residues: UPF0301 protein RPC_0788 (213 aa).

The disordered stretch occupies residues 1 to 20 (MDPKSKAPKRDETKGADDAS).

It belongs to the UPF0301 (AlgH) family.

The protein is UPF0301 protein RPC_0788 of Rhodopseudomonas palustris (strain BisB18).